Consider the following 224-residue polypeptide: Beta-casein (224 aa).

An N-terminal signal peptide occupies residues 1–15; the sequence is MKVLILACLVALALA. 4 positions are modified to phosphoserine: Ser30, Ser32, Ser33, and Ser34. Phosphoserine; in variant A1, variant A2, variant A3, variant B, variant E, variant F, variant G and variant H is present on Ser50.

It belongs to the beta-casein family. As to expression, mammary gland specific. Secreted in milk.

It is found in the secreted. Important role in determination of the surface properties of the casein micelles. Its function is as follows. Casoparan acts as a macrophage activator, increasing the phagocytic activity of macrophages and peroxide release from macrophages. It also acts as a bradykinin-potentiating peptide. In terms of biological role, casohypotensin acts as a bradykinin-potentiating peptide. Induces hypotension in rats. Acts as a strong competitive inhibitor of endo-oligopeptidase A. Functionally, antioxidant peptide has antioxidant activity. The protein is Beta-casein (CSN2) of Bos taurus (Bovine).